The primary structure comprises 334 residues: Ferredoxin--NADP reductase (334 aa).

FAD-binding residues include D33, Q41, Y46, A86, F120, D286, and T327.

Belongs to the ferredoxin--NADP reductase type 2 family. As to quaternary structure, homodimer. It depends on FAD as a cofactor.

The enzyme catalyses 2 reduced [2Fe-2S]-[ferredoxin] + NADP(+) + H(+) = 2 oxidized [2Fe-2S]-[ferredoxin] + NADPH. The polypeptide is Ferredoxin--NADP reductase (Rickettsia massiliae (strain Mtu5)).